The following is a 70-amino-acid chain: Putative membrane protein insertion efficiency factor (70 aa).

This sequence belongs to the UPF0161 family.

It localises to the cell inner membrane. Could be involved in insertion of integral membrane proteins into the membrane. The sequence is that of Putative membrane protein insertion efficiency factor from Geobacter sp. (strain M21).